The following is a 121-amino-acid chain: Large ribosomal subunit protein uL18 (121 aa).

Belongs to the universal ribosomal protein uL18 family. As to quaternary structure, part of the 50S ribosomal subunit; part of the 5S rRNA/L5/L18/L25 subcomplex. Contacts the 5S and 23S rRNAs.

In terms of biological role, this is one of the proteins that bind and probably mediate the attachment of the 5S RNA into the large ribosomal subunit, where it forms part of the central protuberance. The sequence is that of Large ribosomal subunit protein uL18 from Moorella thermoacetica (strain ATCC 39073 / JCM 9320).